The primary structure comprises 279 residues: Protein CMSS1 (279 aa).

Positions 1-10 are enriched in acidic residues; it reads MADDLGDEWW. The disordered stretch occupies residues 1 to 89; the sequence is MADDLGDEWW…DVLAKSEPKP (89 aa). The segment covering 12-22 has biased composition (polar residues); sequence NQPTGAGSSPE. Phosphoserine occurs at positions 19 and 24. At R167 the chain carries Omega-N-methylarginine. The residue at position 212 (T212) is a Phosphothreonine.

This sequence belongs to the CMS1 family.

The protein is Protein CMSS1 (CMSS1) of Homo sapiens (Human).